A 276-amino-acid chain; its full sequence is MAAIDGLPPLRDVIQRHGLDAKKSLGQNFLFDLNLTQKIARTAGPLDGVTVIEVGPGPGGLTRAILSLGAKKVIAVERDSRCLPVLAEIEAHYPGRLEVIEGDALKTDFEALVPAGEPVRIIANLPYNVGTQLLVNWLLPREWPPFWLSMTLMFQKEVGQRIVAEEGDNHYGRLGVLAGWRTVSEMAFDVPPQAFSPPPKVTSTVVHLLPKDKPLPCDVAKLERVTEAAFGQRRKMLRQSVKSLGGETLLEKAGIDPTRRAETLSVEEFVTLANCL.

Positions 28, 30, 55, 77, 103, and 124 each coordinate S-adenosyl-L-methionine.

The protein belongs to the class I-like SAM-binding methyltransferase superfamily. rRNA adenine N(6)-methyltransferase family. RsmA subfamily.

The protein localises to the cytoplasm. It catalyses the reaction adenosine(1518)/adenosine(1519) in 16S rRNA + 4 S-adenosyl-L-methionine = N(6)-dimethyladenosine(1518)/N(6)-dimethyladenosine(1519) in 16S rRNA + 4 S-adenosyl-L-homocysteine + 4 H(+). In terms of biological role, specifically dimethylates two adjacent adenosines (A1518 and A1519) in the loop of a conserved hairpin near the 3'-end of 16S rRNA in the 30S particle. May play a critical role in biogenesis of 30S subunits. In Agrobacterium fabrum (strain C58 / ATCC 33970) (Agrobacterium tumefaciens (strain C58)), this protein is Ribosomal RNA small subunit methyltransferase A.